The primary structure comprises 671 residues: UvrABC system protein B (671 aa).

The Helicase ATP-binding domain occupies 26-414; it reads EGLENGLAHQ…GGDIIEQVVR (389 aa). 39–46 is an ATP binding site; that stretch reads GVTGSGKT. The Beta-hairpin signature appears at 92 to 115; it reads YYDYYQPEAYVPSSDTFIEKDASV. The Helicase C-terminal domain occupies 431–593; the sequence is QVDDLLSEIR…IIPQGLNKKI (163 aa). The UVR domain maps to 631–666; that stretch reads DQKIRELEAKMYTYAQNLEFEQAAELRDQVHQLRQQ.

The protein belongs to the UvrB family. As to quaternary structure, forms a heterotetramer with UvrA during the search for lesions. Interacts with UvrC in an incision complex.

The protein localises to the cytoplasm. The UvrABC repair system catalyzes the recognition and processing of DNA lesions. A damage recognition complex composed of 2 UvrA and 2 UvrB subunits scans DNA for abnormalities. Upon binding of the UvrA(2)B(2) complex to a putative damaged site, the DNA wraps around one UvrB monomer. DNA wrap is dependent on ATP binding by UvrB and probably causes local melting of the DNA helix, facilitating insertion of UvrB beta-hairpin between the DNA strands. Then UvrB probes one DNA strand for the presence of a lesion. If a lesion is found the UvrA subunits dissociate and the UvrB-DNA preincision complex is formed. This complex is subsequently bound by UvrC and the second UvrB is released. If no lesion is found, the DNA wraps around the other UvrB subunit that will check the other stand for damage. The sequence is that of UvrABC system protein B from Yersinia pestis.